The following is a 92-amino-acid chain: uncharacterized protein (92 aa).

The next 3 membrane-spanning stretches (helical) occupy residues 1–21 (MNIY…LVGL), 30–50 (ANVL…IVVI), and 62–82 (IALA…KVIG).

It to M.thermoautotrophicum MTH1250.

The protein resides in the cell membrane. This is an uncharacterized protein from Methanocaldococcus jannaschii (strain ATCC 43067 / DSM 2661 / JAL-1 / JCM 10045 / NBRC 100440) (Methanococcus jannaschii).